We begin with the raw amino-acid sequence, 386 residues long: F420 non-reducing hydrogenase II small subunit (386 aa).

A signal peptide (tat-type signal) is located at residues 1-51; that stretch reads MVEMSTGMKNLTRTLESMDFLKMDRRTFMKAVSALGATAFLGTYQTEIVNA. Cys-67, Cys-70, Cys-178, Cys-227, His-273, Cys-276, Cys-296, and Cys-302 together coordinate [4Fe-4S] cluster. Cys-311, Cys-330, and Cys-333 together coordinate [3Fe-4S] cluster.

This sequence belongs to the [NiFe]/[NiFeSe] hydrogenase small subunit family. In terms of assembly, composed of a large subunit (VhtA), a small subunit (VhtG) and a cytochrome subunit (VhtC). [4Fe-4S] cluster is required as a cofactor. It depends on [3Fe-4S] cluster as a cofactor. In terms of processing, predicted to be exported by the Tat system. The position of the signal peptide cleavage has not been experimentally proven.

Its subcellular location is the cell membrane. It catalyses the reaction methanophenazine + H2 = dihydromethanophenazine. Functionally, part of the F420 non-reducing hydrogenase II complex that catalyzes the reduction of methanophenazine to dihydromethanophenazine. This chain is F420 non-reducing hydrogenase II small subunit, found in Methanosarcina mazei (strain ATCC BAA-159 / DSM 3647 / Goe1 / Go1 / JCM 11833 / OCM 88) (Methanosarcina frisia).